Reading from the N-terminus, the 76-residue chain is ATP synthase subunit c (76 aa).

2 helical membrane passes run 8–28 (LLAA…GVGI) and 55–75 (VAFA…LIFV).

Belongs to the ATPase C chain family. In terms of assembly, F-type ATPases have 2 components, F(1) - the catalytic core - and F(0) - the membrane proton channel. F(1) has five subunits: alpha(3), beta(3), gamma(1), delta(1), epsilon(1). F(0) has three main subunits: a(1), b(2) and c(10-14). The alpha and beta chains form an alternating ring which encloses part of the gamma chain. F(1) is attached to F(0) by a central stalk formed by the gamma and epsilon chains, while a peripheral stalk is formed by the delta and b chains.

The protein localises to the cell membrane. In terms of biological role, f(1)F(0) ATP synthase produces ATP from ADP in the presence of a proton or sodium gradient. F-type ATPases consist of two structural domains, F(1) containing the extramembraneous catalytic core and F(0) containing the membrane proton channel, linked together by a central stalk and a peripheral stalk. During catalysis, ATP synthesis in the catalytic domain of F(1) is coupled via a rotary mechanism of the central stalk subunits to proton translocation. Key component of the F(0) channel; it plays a direct role in translocation across the membrane. A homomeric c-ring of between 10-14 subunits forms the central stalk rotor element with the F(1) delta and epsilon subunits. The protein is ATP synthase subunit c of Dehalococcoides mccartyi (strain ATCC BAA-2266 / KCTC 15142 / 195) (Dehalococcoides ethenogenes (strain 195)).